A 167-amino-acid chain; its full sequence is MATLEVLRFPDERLRTIAQEVAHVDDQVRVIIKDMLETMYDENGIGLAATQVNIHQRIVVIDVSEERNEPLVLINPQIIKKDGTTVSEEGCLSVPNSYAKVDRAETVTVAALNEQGEEFVLDADELLAICIQHELDHLQGKLFIDYLSPLKRQRIRKKLEKEAKFAE.

2 residues coordinate Fe cation: Cys-91 and His-133. Glu-134 is a catalytic residue. His-137 contributes to the Fe cation binding site.

It belongs to the polypeptide deformylase family. Fe(2+) is required as a cofactor.

It catalyses the reaction N-terminal N-formyl-L-methionyl-[peptide] + H2O = N-terminal L-methionyl-[peptide] + formate. Removes the formyl group from the N-terminal Met of newly synthesized proteins. Requires at least a dipeptide for an efficient rate of reaction. N-terminal L-methionine is a prerequisite for activity but the enzyme has broad specificity at other positions. The sequence is that of Peptide deformylase from Pseudoalteromonas translucida (strain TAC 125).